Reading from the N-terminus, the 358-residue chain is Putative cell-type specific agglutination protein pfl7 (358 aa).

Residues 1–23 (MNSLKSLCLKCIVTLCLLVNAFA) form the signal peptide. Asn67, Asn88, Asn112, and Asn136 each carry an N-linked (GlcNAc...) asparagine glycan. Positions 90 to 144 (TISTSSSTPITASVPTSSSILSNSTIPTTSPVPTTSSTPTSSSILSNSTIPSSSS) are disordered. 2 consecutive repeat copies span residues 148 to 180 (STIT…IPTA) and 181 to 218 (GYIT…TPSC). Positions 148–218 (STITTTIISG…GLVEVITPSC (71 aa)) are 2 X 36 AA approximate tandem repeats. The DIPSY domain maps to 207 to 358 (QSGLVEVITP…RADDVILVAY (152 aa)). N-linked (GlcNAc...) asparagine glycans are attached at residues Asn245 and Asn305.

It belongs to the mam3/map4 family.

The protein localises to the cell surface. Its function is as follows. May be involved in agglutination during conjugation or other aspects of colony formation. Induces flocculation when overexpressed. In Schizosaccharomyces pombe (strain 972 / ATCC 24843) (Fission yeast), this protein is Putative cell-type specific agglutination protein pfl7.